The primary structure comprises 463 residues: MVPALRYLGSVCGRARGIFPGGFSAAHTPASGKSRLLCQGGRRASTSSFDIVIIGGGIVGLASARALILRHPALSIGVLEKEKNLAVHQTGHNSGVIHSGIYYKPESLKAKLCVQGAALIYEYCNQKGISYKQCGKLIVAVEQEEIPRLQALYERGLQNGVQGLRLIQQEDIKKKEPYCRGLMAIDCPYTGIVDYRQVAFSFAKDFQEAGGSVLTNFEVEDIEMARESPSRSKDGMKYPIVIRNTKGEEVRCQYVVTCAGLYSDRISELSGCNPNPRIVPFRGDYLVLKPEKRYLVKGNIYPVPDSRFPFLGVHFTPRMDGNIWLGPNAILAFKREGYRPFDFSARDIMDIIIKSGLIKLVFQNFSYGVNEMYKACFLSATVKHLQKFIPEITISDVLRGPAGVRAQALDRDGNLIEDFVFDGGVGDIGNRILHVRNAPSPAATSSLAISGMIADEVQQRFKL.

The N-terminal 52 residues, 1 to 52, are a transit peptide targeting the mitochondrion; that stretch reads MVPALRYLGSVCGRARGIFPGGFSAAHTPASGKSRLLCQGGRRASTSSFDIV. Residues Lys104 and Lys173 each carry the N6-acetyllysine modification.

The protein belongs to the L2HGDH family. The cofactor is FAD.

The protein resides in the mitochondrion. It catalyses the reaction (S)-2-hydroxyglutarate + A = 2-oxoglutarate + AH2. The chain is L-2-hydroxyglutarate dehydrogenase, mitochondrial (L2HGDH) from Bos taurus (Bovine).